Here is an 860-residue protein sequence, read N- to C-terminus: Leucine--tRNA ligase (860 aa).

The short motif at 42 to 52 (PYPSGRLHMGH) is the 'HIGH' region element. The 'KMSKS' region signature appears at 619–623 (KMSKS). K622 lines the ATP pocket.

This sequence belongs to the class-I aminoacyl-tRNA synthetase family.

Its subcellular location is the cytoplasm. It catalyses the reaction tRNA(Leu) + L-leucine + ATP = L-leucyl-tRNA(Leu) + AMP + diphosphate. The chain is Leucine--tRNA ligase from Escherichia coli (strain 55989 / EAEC).